A 131-amino-acid polypeptide reads, in one-letter code: ATP synthase epsilon chain (131 aa).

This sequence belongs to the ATPase epsilon chain family. In terms of assembly, F-type ATPases have 2 components, CF(1) - the catalytic core - and CF(0) - the membrane proton channel. CF(1) has five subunits: alpha(3), beta(3), gamma(1), delta(1), epsilon(1). CF(0) has three main subunits: a, b and c.

Its subcellular location is the cell membrane. In terms of biological role, produces ATP from ADP in the presence of a proton gradient across the membrane. The chain is ATP synthase epsilon chain from Bacillus licheniformis (strain ATCC 14580 / DSM 13 / JCM 2505 / CCUG 7422 / NBRC 12200 / NCIMB 9375 / NCTC 10341 / NRRL NRS-1264 / Gibson 46).